We begin with the raw amino-acid sequence, 868 residues long: MARLLLALLAWLAQMSPVRAAGSVRLAGGLTLGGLFPVHARGAAGRACGQLKKEQGVHRLEAMLYALDRVNADPELLPGVRLGARLLDTCSRDTYALEQALSFVQALIRGRGDGDEAAVRCPGGVPPLRAAPPERVVAVVGASASSVSIMVANVLRLFAIPQISYASTAPELSDSTRYDFFSRVVPPDSYQAQAMVDIVRALGWNYVSTLASEGNYGESGVEAFVQISREAGGVCIAQSIKIPREPKPGEFNKVIKRLMETPNARGIIIFANEDDIRRVLEATRQANLTGHFLWVGSDSWGSKTSPVLSLEDVAVGAITILPKRASIDGFDQYFMTRSLENNRRNIWFAEFWEENFNCKLTSSGGQSDEATRKCTGEERIGQDSAYEQEGKVQFVIDAVYAIAHALHSMHQALCPGYTGLCPAMEPTDGRTLLQYIRAVRFNGSAGTPVMFNENGDAPGRYDIFQYQATNGSASSGGYQVVGQWAEALRLDVEALQWSGDPHEVPPSQCSLPCGPGERKKMVKGVPCCWHCEACDGYRFQVDEFTCEACPRDMRPTPNHTGCRPTPVVRLTWSSPWAAPPLLLAVLGIMATTTVVGTFVRHNNTPIVRASGRELSYVLLTGIFLIYAVTFLMVAEPGAAVCATRRLFLGLGTTLSYSALLTKTNRIYRIFEQGKRSVTPPPFISPTSQLVITFSLTSLQVVGVIAWLGAQPPHSVIDYEEQRTVDPEQARGVLKCDMSDLSLIGCLGYSLLLMVTCTVYAIKARGVPETFNEAKPIGFTMYTTCIVWLAFVPIFFGTAQSAEKIYIQTTTLTVSLSLSASVSLGMLYVPKTYVILFHPEQNVQKRKRSLKTTSTVAAPPKGADTEDPK.

Positions 1 to 20 are cleaved as a signal peptide; that stretch reads MARLLLALLAWLAQMSPVRA. Residues 21 to 576 are Extracellular-facing; it reads AGSVRLAGGL…VVRLTWSSPW (556 aa). Cysteine 48 and cysteine 90 are joined by a disulfide. Residues serine 145, 166-168, and tyrosine 216 contribute to the L-glutamate site; that span reads AST. Cystine bridges form between cysteine 235-cysteine 527, cysteine 358-cysteine 374, cysteine 414-cysteine 421, cysteine 509-cysteine 528, cysteine 513-cysteine 531, cysteine 534-cysteine 546, and cysteine 549-cysteine 562. An N-linked (GlcNAc...) asparagine glycan is attached at asparagine 287. Aspartate 298 contributes to the L-glutamate binding site. An L-glutamate-binding site is contributed by lysine 391. Asparagine 442 and asparagine 470 each carry an N-linked (GlcNAc...) asparagine glycan. Asparagine 558 is a glycosylation site (N-linked (GlcNAc...) asparagine). A helical membrane pass occupies residues 577-599; the sequence is AAPPLLLAVLGIMATTTVVGTFV. The Cytoplasmic portion of the chain corresponds to 600-613; that stretch reads RHNNTPIVRASGRE. Residues 614-634 traverse the membrane as a helical segment; it reads LSYVLLTGIFLIYAVTFLMVA. The Extracellular segment spans residues 635 to 645; that stretch reads EPGAAVCATRR. The chain crosses the membrane as a helical span at residues 646–664; it reads LFLGLGTTLSYSALLTKTN. Over 665-688 the chain is Cytoplasmic; it reads RIYRIFEQGKRSVTPPPFISPTSQ. Residues 689 to 709 form a helical membrane-spanning segment; the sequence is LVITFSLTSLQVVGVIAWLGA. At 710–739 the chain is on the extracellular side; it reads QPPHSVIDYEEQRTVDPEQARGVLKCDMSD. Residues 740–761 traverse the membrane as a helical segment; sequence LSLIGCLGYSLLLMVTCTVYAI. Residues 762–774 lie on the Cytoplasmic side of the membrane; sequence KARGVPETFNEAK. Residues 775–797 traverse the membrane as a helical segment; sequence PIGFTMYTTCIVWLAFVPIFFGT. Residues 798–810 lie on the Extracellular side of the membrane; that stretch reads AQSAEKIYIQTTT. A helical membrane pass occupies residues 811–836; sequence LTVSLSLSASVSLGMLYVPKTYVILF. At 837 to 868 the chain is on the cytoplasmic side; sequence HPEQNVQKRKRSLKTTSTVAAPPKGADTEDPK. Residues 845-868 are disordered; it reads RKRSLKTTSTVAAPPKGADTEDPK.

Belongs to the G-protein coupled receptor 3 family. As to quaternary structure, homodimer. Interacts with GPR179. Interacts with photoreceptor synaptic protein LRIT1 (via its N-terminal extracellular domain).

It is found in the cell membrane. It localises to the endoplasmic reticulum membrane. Its subcellular location is the golgi apparatus membrane. The protein localises to the cell projection. The protein resides in the dendrite. In terms of biological role, G-protein coupled receptor for glutamate. Ligand binding causes a conformation change that triggers signaling via guanine nucleotide-binding proteins (G proteins) and modulates the activity of down-stream effectors, such as adenylate cyclase. Signaling inhibits adenylate cyclase activity. Signaling stimulates TRPM1 channel activity and Ca(2+) uptake. Required for normal vision. This Oryctolagus cuniculus (Rabbit) protein is Metabotropic glutamate receptor 6 (GRM6).